The sequence spans 379 residues: Alcohol dehydrogenase 2 (379 aa).

Zn(2+) is bound by residues Cys47, Thr49, His69, Cys99, Cys102, Cys105, Cys113, and Cys177. An alcohol is bound by residues Thr49 and His69. Thr49 serves as a coordination point for NAD(+). NAD(+)-binding positions include 202 to 207, Asp226, Lys231, Thr272, Val295, 295 to 297, Phe322, and Arg372; these read GLGAVG and VGV.

This sequence belongs to the zinc-containing alcohol dehydrogenase family. Homodimer. The cofactor is Zn(2+).

The protein localises to the cytoplasm. It carries out the reaction a primary alcohol + NAD(+) = an aldehyde + NADH + H(+). The catalysed reaction is a secondary alcohol + NAD(+) = a ketone + NADH + H(+). The chain is Alcohol dehydrogenase 2 (ADH2) from Oryza sativa subsp. indica (Rice).